The following is a 273-amino-acid chain: Putative carboxymethylenebutenolidase (273 aa).

Residues Cys130, Asp191, and His223 contribute to the active site.

It belongs to the dienelactone hydrolase family.

The enzyme catalyses 2-(5-oxo-2,5-dihydrofuran-2-ylidene)acetate + H2O = 4-oxohex-2-enedioate + H(+). This chain is Putative carboxymethylenebutenolidase, found in Saccharomyces cerevisiae (strain ATCC 204508 / S288c) (Baker's yeast).